Reading from the N-terminus, the 368-residue chain is Cytochrome-c peroxidase IdrP2 (368 aa).

An N-terminal signal peptide occupies residues 1-27 (MKWHRGRLTQTLGAMGLTATLTVAAQA). 2 Cytochrome c domains span residues 48 to 158 (AMIE…ALWQ) and 201 to 346 (KEAQ…LTLS). Heme c is bound by residues Cys-70, Cys-73, His-74, Cys-216, Cys-219, and His-220.

As to quaternary structure, the iodate reductase (Idr) complex is composed of a molybdopterin-dependent iodate reductase (IdrA and IdrB subunits) and two associated peroxidases (IdrP1 and IdrP2). The cofactor is heme c.

The protein localises to the periplasm. It carries out the reaction 2 Fe(II)-[cytochrome c] + H2O2 + 2 H(+) = 2 Fe(III)-[cytochrome c] + 2 H2O. Its function is as follows. Involved in iodate respiration. Probably reduces the H(2)O(2) produced by IdrA/IdrB to H(2)O, using a reduced cytochrome c as the electron donor. The chain is Cytochrome-c peroxidase IdrP2 from Pseudomonas sp. (strain SCT).